A 786-amino-acid chain; its full sequence is Cas scaffolding protein family member 4 (786 aa).

Residues 11 to 73 form the SH3 domain; it reads PKALLARALY…PANRLQILTE (63 aa). A phosphoserine mark is found at Ser-200 and Ser-249. A disordered region spans residues 262 to 295; sequence SFAEESRPHALPSSSSTFYNPPSGRSRSLTPQLN. Over residues 273 to 295 the composition is skewed to polar residues; the sequence is PSSSSTFYNPPSGRSRSLTPQLN. Phosphoserine is present on Ser-305. 2 disordered regions span residues 361-429 and 612-670; these read QAGK…SEES and IQPP…ERKP. Positions 364–373 are enriched in basic and acidic residues; that stretch reads KELEKAKEVS. The span at 374-391 shows a compositional bias: polar residues; sequence ENSAGHNSSWFSRRTTSP. A phosphoserine mark is found at Ser-376 and Ser-390. Positions 399–427 are enriched in low complexity; the sequence is SGSSSDSRASIVSSCSTTSTDDSSSSSSE. Over residues 630 to 642 the composition is skewed to basic and acidic residues; it reads KQREDEHSSELLK.

It belongs to the CAS family. As to quaternary structure, interacts (via SH3 domain) with PTK2/FAK1 (via C-terminus). Phosphorylated on tyrosines by SRC. Expressed abundantly in lung and spleen. Also highly expressed in ovarian and leukemia cell lines.

The protein resides in the cytoplasm. It is found in the cytoskeleton. Its subcellular location is the cell junction. It localises to the focal adhesion. Docking protein that plays a role in tyrosine kinase-based signaling related to cell adhesion and cell spreading. Regulates PTK2/FAK1 activity, focal adhesion integrity, and cell spreading. The sequence is that of Cas scaffolding protein family member 4 (CASS4) from Homo sapiens (Human).